A 558-amino-acid polypeptide reads, in one-letter code: Kelch-like protein 23 (558 aa).

Residues 36–104 (TDITLQCPSG…AYTSQIEITE (69 aa)) form the BTB domain. Residues 139-240 (CIGMHSFAEF…DPVYLKTALG (102 aa)) enclose the BACK domain. Kelch repeat units follow at residues 274-320 (TMYI…CLGP), 321-369 (NIYV…TLGG), 370-416 (CVYA…VLHD), 418-466 (IYVI…PLEN), 467-508 (KLYL…IMNG), and 510-557 (IYVT…CVYN).

In Pongo abelii (Sumatran orangutan), this protein is Kelch-like protein 23 (KLHL23).